A 736-amino-acid polypeptide reads, in one-letter code: Elongation factor 2 (736 aa).

Residues Glu-18 to Arg-261 enclose the tr-type G domain. GTP-binding positions include Ala-27–Thr-34, Asp-93–His-97, and Asn-147–Asp-150. At His-602 the chain carries Diphthamide.

Belongs to the TRAFAC class translation factor GTPase superfamily. Classic translation factor GTPase family. EF-G/EF-2 subfamily.

It is found in the cytoplasm. Functionally, catalyzes the GTP-dependent ribosomal translocation step during translation elongation. During this step, the ribosome changes from the pre-translocational (PRE) to the post-translocational (POST) state as the newly formed A-site-bound peptidyl-tRNA and P-site-bound deacylated tRNA move to the P and E sites, respectively. Catalyzes the coordinated movement of the two tRNA molecules, the mRNA and conformational changes in the ribosome. The sequence is that of Elongation factor 2 from Desulfurococcus amylolyticus (strain DSM 18924 / JCM 16383 / VKM B-2413 / 1221n) (Desulfurococcus kamchatkensis).